A 96-amino-acid polypeptide reads, in one-letter code: Dynein light chain roadblock-type 1 (96 aa).

An N-acetylalanine modification is found at Ala-2.

The protein belongs to the GAMAD family. Homodimer. The cytoplasmic dynein 1 complex consists of two catalytic heavy chains (HCs) and a number of non-catalytic subunits presented by intermediate chains (ICs), light intermediate chains (LICs) and light chains (LCs); the composition seems to vary in respect to the IC, LIC and LC composition. The heavy chain homodimer serves as a scaffold for the probable homodimeric assembly of the respective non-catalytic subunits. The ICs and LICs bind directly to the HC dimer and the LCs assemble on the IC dimer. Interacts with DYNLRB2. Interacts with DYNC1I1 and DYNC1I2. Interacts with RAB6A isoform 1 (GTP-bound); the interaction is direct. Interacts with RAB6A isoform 2 (GDP-bound); the interaction is direct. Interacts with RAB6B (GDP-bound).

The protein localises to the cytoplasm. It is found in the cytoskeleton. In terms of biological role, acts as one of several non-catalytic accessory components of the cytoplasmic dynein 1 complex that are thought to be involved in linking dynein to cargos and to adapter proteins that regulate dynein function. Cytoplasmic dynein 1 acts as a motor for the intracellular retrograde motility of vesicles and organelles along microtubules. The sequence is that of Dynein light chain roadblock-type 1 (Dynlrb1) from Mus musculus (Mouse).